Consider the following 217-residue polypeptide: GrpE protein homolog 1, mitochondrial (217 aa).

The transit peptide at 1–27 directs the protein to the mitochondrion; sequence MAAQCVRLARRSLPALALSLRPSPRLL. The segment at 29-56 is disordered; it reads TATKQKNSGQNLEEDMGQSEQKADPPAT. A compositionally biased stretch (polar residues) spans 30 to 39; it reads ATKQKNSGQN. Position 94 is an N6-acetyllysine; alternate (Lys-94). Position 94 is an N6-succinyllysine; alternate (Lys-94). The residue at position 100 (Lys-100) is an N6-acetyllysine. N6-succinyllysine is present on Lys-120. Lys-215 carries the post-translational modification N6-acetyllysine; alternate. Lys-215 is subject to N6-succinyllysine; alternate.

It belongs to the GrpE family. In terms of assembly, probable component of the PAM complex at least composed of a mitochondrial HSP70 protein, GRPEL1 or GRPEL2, TIMM44, TIMM16/PAM16 and TIMM14/DNAJC19. Binds to HSP70, HSC70 and HSJ1B.

It is found in the mitochondrion matrix. In terms of biological role, essential component of the PAM complex, a complex required for the translocation of transit peptide-containing proteins from the inner membrane into the mitochondrial matrix in an ATP-dependent manner. Seems to control the nucleotide-dependent binding of mitochondrial HSP70 to substrate proteins. This Homo sapiens (Human) protein is GrpE protein homolog 1, mitochondrial (GRPEL1).